The primary structure comprises 390 residues: 8-amino-7-oxononanoate synthase (390 aa).

Residue Arg-19 coordinates substrate. 106 to 107 (GY) is a binding site for pyridoxal 5'-phosphate. His-131 serves as a coordination point for substrate. Pyridoxal 5'-phosphate contacts are provided by Ser-176, His-204, and Thr-233. Lys-236 bears the N6-(pyridoxal phosphate)lysine mark. Thr-350 lines the substrate pocket.

This sequence belongs to the class-II pyridoxal-phosphate-dependent aminotransferase family. BioF subfamily. In terms of assembly, homodimer. Pyridoxal 5'-phosphate serves as cofactor.

It catalyses the reaction 6-carboxyhexanoyl-[ACP] + L-alanine + H(+) = (8S)-8-amino-7-oxononanoate + holo-[ACP] + CO2. The protein operates within cofactor biosynthesis; biotin biosynthesis. In terms of biological role, catalyzes the decarboxylative condensation of pimeloyl-[acyl-carrier protein] and L-alanine to produce 8-amino-7-oxononanoate (AON), [acyl-carrier protein], and carbon dioxide. This is 8-amino-7-oxononanoate synthase from Pseudomonas putida (strain GB-1).